Here is a 210-residue protein sequence, read N- to C-terminus: Molybdenum cofactor guanylyltransferase (210 aa).

Residues 9-11, lysine 21, aspartate 66, and aspartate 95 contribute to the GTP site; that span reads LAG. Residue aspartate 95 participates in Mg(2+) binding.

It belongs to the MobA family. As to quaternary structure, monomer. Requires Mg(2+) as cofactor.

The protein resides in the cytoplasm. It carries out the reaction Mo-molybdopterin + GTP + H(+) = Mo-molybdopterin guanine dinucleotide + diphosphate. Functionally, transfers a GMP moiety from GTP to Mo-molybdopterin (Mo-MPT) cofactor (Moco or molybdenum cofactor) to form Mo-molybdopterin guanine dinucleotide (Mo-MGD) cofactor. The chain is Molybdenum cofactor guanylyltransferase from Syntrophotalea carbinolica (strain DSM 2380 / NBRC 103641 / GraBd1) (Pelobacter carbinolicus).